The primary structure comprises 240 residues: Probable transcriptional regulatory protein HPAG1_0159 (240 aa).

The protein belongs to the TACO1 family.

The protein resides in the cytoplasm. This Helicobacter pylori (strain HPAG1) protein is Probable transcriptional regulatory protein HPAG1_0159.